The primary structure comprises 1034 residues: Potassium-transporting ATPase alpha chain 1 (1034 aa).

Topologically, residues 1-97 (MGKAENYEMY…NALRPPRGTP (97 aa)) are cytoplasmic. Phosphotyrosine occurs at positions 7 and 10. A disordered region spans residues 14–41 (LGPGPGGDMAAKMSKKKAGKGGGKKKEK). A compositionally biased stretch (basic residues) spans 26 to 39 (MSKKKAGKGGGKKK). The residue at position 27 (Ser-27) is a Phosphoserine. The chain crosses the membrane as a helical span at residues 98-118 (EYVKFARQLAGGLQCLMWVAA). The Lumenal segment spans residues 119–141 (AICLIAFAIQASEGDLTTDDNLY). A helical membrane pass occupies residues 142 to 162 (LALALIAVVVVTGCFGYYQEF). At 163-298 (KSTNIIASFK…NEKTPIAIEI (136 aa)) the chain is on the cytoplasmic side. Residues 225–239 (NSSLTGESEPQTRSP) are compositionally biased toward polar residues. Residues 225–245 (NSSLTGESEPQTRSPECTHES) form a disordered region. The chain crosses the membrane as a helical span at residues 299-318 (EHFVDIIAGLAILFGATFFV). Topologically, residues 319–330 (VAMCIGYTFLRA) are lumenal. Residues 331 to 348 (MVFFMAIVVAYVPEGLLA) traverse the membrane as a helical segment. K(+) contacts are provided by Val-339, Ala-340, Val-342, and Glu-344. Over 349–782 (TVTVCLSLTA…EQGRLIFDNL (434 aa)) the chain is Cytoplasmic. The 4-aspartylphosphate intermediate role is filled by Asp-386. Mg(2+)-binding residues include Asp-386 and Thr-388. Phosphoserine is present on residues Ser-462 and Ser-600. Mg(2+)-binding residues include Asp-727 and Asp-731. Residues 783–802 (KKSIAYTLTKNIPELTPYLI) traverse the membrane as a helical segment. Glu-796 is a binding site for K(+). Over 803-812 (YITVSVPLPL) the chain is Lumenal. Residues 813-833 (GCITILFIELCTDIFPSVSLA) traverse the membrane as a helical segment. Glu-821 lines the K(+) pocket. Over 834–853 (YEKAESDIMHLRPRNPKRDR) the chain is Cytoplasmic. Position 839 is a phosphoserine (Ser-839). The chain crosses the membrane as a helical span at residues 854 to 876 (LVNEPLAAYSYFQIGAIQSFAGF). Residues 877–928 (TDYFTAMAQEGWFPLLCVGLRPYWENHHLQDLQDSYGQEWTFGQRLYQQYTC) are Lumenal-facing. A helical membrane pass occupies residues 929-948 (YTVFFISIEMCQIADVLIRK). At 949-962 (TRRLSAFQQGFFRN) the chain is on the cytoplasmic side. Ser-953 bears the Phosphoserine; by PKA mark. The helical transmembrane segment at 963 to 981 (RILVIAIVFQVCIGCFLCY) threads the bilayer. Topologically, residues 982 to 996 (CPGMPNIFNFMPIRY) are lumenal. The helical transmembrane segment at 997 to 1017 (QWWLVPMPFGLLIFVYDEIRK) threads the bilayer. At 1018 to 1034 (LGVRCCPGSWWDQELYY) the chain is on the cytoplasmic side.

This sequence belongs to the cation transport ATPase (P-type) (TC 3.A.3) family. Type IIC subfamily. The gastric H(+)/K(+) ATPase pump is composed of the catalytic alpha subunit ATP4A and the regulatory beta subunit ATP4B. Interacts (via the P-domain) with ATP4B (via N-terminus); this interaction stabilizes the lumenal-open E2 conformation state and prevents the reverse reaction of the transport cycle.

Its subcellular location is the apical cell membrane. It carries out the reaction K(+)(out) + ATP + H2O + H(+)(in) = K(+)(in) + ADP + phosphate + 2 H(+)(out). In terms of biological role, the catalytic subunit of the gastric H(+)/K(+) ATPase pump which transports H(+) ions in exchange for K(+) ions across the apical membrane of parietal cells. Uses ATP as an energy source to pump H(+) ions to the gastric lumen while transporting K(+) ion from the lumen into the cell. Remarkably generates a million-fold proton gradient across the gastric parietal cell membrane, acidifying the gastric juice down to pH 1. Within a transport cycle, the transfer of a H(+) ion across the membrane is coupled to ATP hydrolysis and is associated with a transient phosphorylation that shifts the pump conformation from inward-facing (E1) to outward-facing state (E2). The release of the H(+) ion in the stomach lumen is followed by binding of K(+) ion converting the pump conformation back to the E1 state. This is Potassium-transporting ATPase alpha chain 1 (ATP4A) from Canis lupus familiaris (Dog).